We begin with the raw amino-acid sequence, 215 residues long: UPF0502 protein CKO_01995 (215 aa).

The protein belongs to the UPF0502 family.

The sequence is that of UPF0502 protein CKO_01995 from Citrobacter koseri (strain ATCC BAA-895 / CDC 4225-83 / SGSC4696).